Here is a 2250-residue protein sequence, read N- to C-terminus: MPSRGSFRGRGRGSGSGFGSNTRFTGRRRGRGGGGGGGGVAYGIDRRPATSTNQANREDGTAATEKFEEVKVYDEIDEKIGFWRFESVRAEGEEKVGWLVNMHQTLVPSDVHPGGLAAVDYYFIQDDGGSFKVSIPYEPYFYLTCRGGTESIVEEWLLKRYEGIIIRIEREKKWDLSLPNHLLSAPPVFLKLFFHNTADLQTIRRDLLPLARSNSEKFTAVDAYADVVSAEAAANGHGDDENRAWGAEDDTKKKKDKEPSECIIEVREHDLAYHLRVAIDLNIRVGLWYTVTSRTGVITLERIPDRVKRADPVVMAYDIETTKQPLKFPDQQTDQIMMISYMIDGMGYLITNREIVGEDIDDFEYTPKDEYPGEFTVFNEPDEPAVIRRWFEHIRDSKPTVIATYNGDSFDFPFVDARAKIHGISMYEEIGFKPDIEEEYKSRSTMHMDCFRWVKRDSYLPQGSQGLKAVTTAKLGYNPIELDPELMTPYAIEQPQILAQYSVSDAVATYYLYMKYVHPFIFSLCNIIPLSPDEVLRKGTGTLCETLLMVEAYDAHIIMPNRHEDPHGVTYEGHLLASETYVGGHVEALEAGVFRSDIPTHFKIVPSAIQELIDDLDAALRFSLIEEGQVKLEDVENYDEVKQQIQTALETMRDEPNRFDNPLIYHLDVAAMYPNIMLSNRLQPDSVKEEADCAVCDYNRPDKKCDRRMEWAWRGEYFPAKRDEVNMVRYALEQETFPPKRPYDPKRRFVDLTPTEQSALLHKRLGDYSRKVYKKTHDTKIVTKTTIICQRENSFYIDTVRAFRDRRYEYKGLHKTWKKNLDKAFEEGGAVATVDEAKKMIVLYDSLQLAHKCILNSFYGYVMRKGARWYSMEMAGITCLTGATIIQMARQLVEQIGRPLELDTDGIWCMLPGVFPEDFNFKLKNGKKFGISYPCTMLNHLVHAQFTNDQYHELVNNDSGTYNVKKENSIFFELDGPYKAMILPSSKEEDKLLKKRYAVFNPDGSLAELKGFEVKRRGELQMIKIFQSQIFDKFLLGKTTEECYAAVATVADQWLDILQSKASSLHDDELVDLIAENRSMSKTLAEYAGQKSTSISTARRLAEFLGEQMVKDKGLSCRFIISAKPNGAPVTERAVPVAIFTAEEPVKRHYLRKWLKDNSLTDFDLRTILDWDYYTERLGSVIQKLITIPAALQKVPNPVPRIRHPDWLYKRIATKEDKFQQHKITDMFTKLKDMEDLGDGQKKVGPKLAVVRRRNRKEQEKESEVEEVPPEPEYDYAGYIRIMKKKWRKQRQEKARARKSGLRQDGTISSMLRTQTSSMNSKQWDVIQIASTNRPGEFKLWLAIDGTFQSVRLKVPREFYLNFKEDPEPQMLATDRYEAVEVVRTLPRGQPARHLYKLSVDEVLFMEGESHFSTLINNPNVDGAFELQVPLVVRALLSLGTSCALRSNILGGLNRGLDKGFDLVDLERSGNLSRRKYLNEGRGIRYHFLFHAVADQRHIIGLFSPDSTNASIYLVDRAKNRQQLPNPLKFYTDRVERAERGVFSYPDMLDFTTSYHSSESSAFKALGKDLQAINHGLNVIALCSPFEHSYYQAKAPVYSNFPFITYRLGKEEDPGLMWLLQTSRRMIGLYLRLSSWLKEQIQIASHFDVPIGNLGADIAVFLADIEFARRLKQQDMLIWWSSTPRPDLGGSEEDANSSEDLVSPHISNRGCYSSTVLEMEVSDLAINAVLQSALVNEMEGSGTGSLAFDSASHNLDEYAKGAVNTSVMLGDAVLSTQTFGVLKSMLRAWYADKARAHVKGDSLSPAEIVVDQFWRWISSSTSSMFEPALHRFLHGLMRKTFLQLLAEFKRLGTQVVYADFGRVFLLTSKPDAGSAFAFAKYLVAAANSQELFRHLIIDVAQFWNYLAWMDVANFGGVKVSPETAASREPPAKRFEISMDWNIQSFLPGTLQPVFERNVASFIFSLYSAKRSSSDGREPLRVIHSLNIDQPGTEATSTMNPTKEKEKKAASKSISQTLTRRLLSDIAAVKRQQAAVHLEPEEAYTLAFPDLPGARSKRINPTLELIKAITEVYSLASEHSIEVQILKRNLLDLIGVKEFSSDAAFNPPCESIEVPMVICKKCNAIRDVDLCRDPDRLPSVNPDSGEMLEPARKNWVCHKCDSEYDRFQIEQPLIEMVTKTITNYQIQDVICLKCSQTKSDNLAATCKCGGGFRTTSNRNELKTKLKMIKSVCDYHKLPFAGSYVEETLSRW.

Disordered stretches follow at residues 1–63, 235–259, and 1990–2010; these read MPSR…GTAA, NGHG…DKEP, and PGTE…KAAS. A compositionally biased stretch (gly residues) spans 32–41; that stretch reads GGGGGGGGVA. The span at 249 to 259 shows a compositional bias: basic and acidic residues; that stretch reads DDTKKKKDKEP. Residues 1990–2000 show a composition bias toward polar residues; it reads PGTEATSTMNP. Zn(2+) contacts are provided by Cys2118, Cys2121, Cys2156, and Cys2159. A CysA-type zinc finger spans residues 2118-2159; it reads CKKCNAIRDVDLCRDPDRLPSVNPDSGEMLEPARKNWVCHKC. [4Fe-4S] cluster contacts are provided by Cys2190, Cys2193, Cys2205, and Cys2207. The CysB motif signature appears at 2190 to 2207; sequence CLKCSQTKSDNLAATCKC.

This sequence belongs to the DNA polymerase type-B family. Heterotetramer. Consists of 4 subunits: POL2, DPB2, DPB3 and DPB4. [4Fe-4S] cluster is required as a cofactor.

The protein resides in the nucleus. It carries out the reaction DNA(n) + a 2'-deoxyribonucleoside 5'-triphosphate = DNA(n+1) + diphosphate. Its function is as follows. DNA polymerase II participates in chromosomal DNA replication. The polypeptide is DNA polymerase epsilon catalytic subunit A (POL2) (Cryptococcus neoformans var. neoformans serotype D (strain JEC21 / ATCC MYA-565) (Filobasidiella neoformans)).